A 101-amino-acid polypeptide reads, in one-letter code: MKKWSDTEVFEMLKRMYARVYGLVQGVGFRKFVQIHAIRLGIKGYAKNLPDGSVEVVAEGYEEALSKLLERIKQGPPAAEVEKVDYSFSEYKGEFEDFETY.

In terms of domain architecture, Acylphosphatase-like spans 15–101; it reads RMYARVYGLV…KGEFEDFETY (87 aa). Catalysis depends on residues arginine 30 and asparagine 48.

It belongs to the acylphosphatase family.

It catalyses the reaction an acyl phosphate + H2O = a carboxylate + phosphate + H(+). This Saccharolobus solfataricus (strain ATCC 35092 / DSM 1617 / JCM 11322 / P2) (Sulfolobus solfataricus) protein is Acylphosphatase (acyP).